Reading from the N-terminus, the 190-residue chain is Imidazoleglycerol-phosphate dehydratase (190 aa).

It belongs to the imidazoleglycerol-phosphate dehydratase family.

It is found in the cytoplasm. The catalysed reaction is D-erythro-1-(imidazol-4-yl)glycerol 3-phosphate = 3-(imidazol-4-yl)-2-oxopropyl phosphate + H2O. Its pathway is amino-acid biosynthesis; L-histidine biosynthesis; L-histidine from 5-phospho-alpha-D-ribose 1-diphosphate: step 6/9. The polypeptide is Imidazoleglycerol-phosphate dehydratase (Methanococcus vannielii (strain ATCC 35089 / DSM 1224 / JCM 13029 / OCM 148 / SB)).